A 575-amino-acid polypeptide reads, in one-letter code: Dual specificity protein phosphatase YVH1 (575 aa).

The tract at residues 185-213 (KHNNNNNNNNNNNNNNNNNNNNNNCCTFK) is disordered. Residues 187–208 (NNNNNNNNNNNNNNNNNNNNNN) are compositionally biased toward low complexity. Residues 283–435 (NYKINQEEDT…LLLYEKMNYT (153 aa)) form the Tyrosine-protein phosphatase domain. The active-site Phosphocysteine intermediate is the cysteine 379. Residues cysteine 476 and cysteine 530 each contribute to the Zn(2+) site.

It belongs to the protein-tyrosine phosphatase family. Non-receptor class dual specificity subfamily. Interacts with PES. The cofactor is Zn(2+).

It is found in the cytoplasm. The protein resides in the nucleus. It carries out the reaction O-phospho-L-tyrosyl-[protein] + H2O = L-tyrosyl-[protein] + phosphate. The catalysed reaction is O-phospho-L-seryl-[protein] + H2O = L-seryl-[protein] + phosphate. Functionally, dual specificity protein phosphatase which dephosphorylates both phosphotyrosine and phosphoserine residues. In Plasmodium falciparum (isolate 3D7), this protein is Dual specificity protein phosphatase YVH1.